A 310-amino-acid polypeptide reads, in one-letter code: Dihydroorotate dehydrogenase B (NAD(+)), catalytic subunit (310 aa).

Residues Ser-19 and 43 to 44 (KA) each bind FMN. Substrate-binding positions include Lys-43 and 67–71 (NAIGL). Residues Asn-97 and Asn-125 each contribute to the FMN site. Residue Asn-125 coordinates substrate. The active-site Nucleophile is Cys-128. FMN-binding residues include Lys-163 and Ile-189. 190–191 (NT) is a substrate binding site. FMN contacts are provided by residues Gly-215, 241-242 (GG), and 263-264 (GT).

It belongs to the dihydroorotate dehydrogenase family. Type 1 subfamily. Heterotetramer of 2 PyrK and 2 PyrD type B subunits. Requires FMN as cofactor.

Its subcellular location is the cytoplasm. It carries out the reaction (S)-dihydroorotate + NAD(+) = orotate + NADH + H(+). Its pathway is pyrimidine metabolism; UMP biosynthesis via de novo pathway; orotate from (S)-dihydroorotate (NAD(+) route): step 1/1. In terms of biological role, catalyzes the conversion of dihydroorotate to orotate with NAD(+) as electron acceptor. The protein is Dihydroorotate dehydrogenase B (NAD(+)), catalytic subunit (pyrD) of Bacillus pumilus (strain SAFR-032).